The sequence spans 62 residues: MAKVCYFTGRKTVSANNRSHAMNKTKRVAKPNLQKVTVLIDGKPKKVWASARALKSGKVERV.

It belongs to the bacterial ribosomal protein bL28 family.

The polypeptide is Large ribosomal subunit protein bL28 (Streptococcus mutans serotype c (strain ATCC 700610 / UA159)).